Consider the following 148-residue polypeptide: MAASGMLISNPSNVCFRKPQFSCSLKPKATVSELGFLTSQLSGIQISPSPLFPIISKPISAPLKPSLQPVARRICPFTGKKSNKANRVSHSNHKTKRLQFVNLQYKRVWWEAGKRFVKLRLSTKALKTIEKNGLDAVAKKAGIDLRKE.

The N-terminal 71 residues, 1-71 (MAASGMLISN…PLKPSLQPVA (71 aa)), are a transit peptide targeting the chloroplast.

As to quaternary structure, component of the chloroplast large ribosomal subunit (LSU). Mature 70S chloroplast ribosomes of higher plants consist of a small (30S) and a large (50S) subunit. The 30S small subunit contains 1 molecule of ribosomal RNA (16S rRNA) and 24 different proteins. The 50S large subunit contains 3 rRNA molecules (23S, 5S and 4.5S rRNA) and 33 different proteins.

Its subcellular location is the plastid. It is found in the chloroplast. Component of the chloroplast ribosome (chloro-ribosome), a dedicated translation machinery responsible for the synthesis of chloroplast genome-encoded proteins, including proteins of the transcription and translation machinery and components of the photosynthetic apparatus. The polypeptide is Large ribosomal subunit protein bL28c (RPL28) (Spinacia oleracea (Spinach)).